The chain runs to 517 residues: Cytochrome P450 monooxygenase bsc11 (517 aa).

Residues 16–33 (ALPLTCTGLIIIFAFYLS) traverse the membrane as a helical segment. Asn204 is a glycosylation site (N-linked (GlcNAc...) asparagine). A heme-binding site is contributed by Cys448.

The protein belongs to the cytochrome P450 family. The cofactor is heme.

It is found in the membrane. The protein operates within mycotoxin biosynthesis. Its function is as follows. Cytochrome P450 monooxygenase; part of the gene cluster that mediates the biosynthesis of the diterpene glucoside brassicicene C. In the first step of the brassicicene C biosynthesis, the bifunctional diterpene synthase bsc8 that possesses both prenyl transferase and terpene cyclase activity, converts isopentenyl diphosphate and dimethylallyl diphosphate into geranylgeranyl diphosphate (GGDP) that is further converted into fusicocca-2,10(14)-diene, the first precursor for brassicicene C. Fusicocca-2,10(14)-diene is then substrate of cytochrome P450 monooxygenase bsc1 for hydroxylation at the C-8 position. Oxidation at C-16 position to aldehyde is then catalyzed by the cytochrome P450 monooyxygenase bsc7, yielding fusicocca-2,10(14)-diene-8-beta,16-diol. Follows the isomerization of the double bond and reduction of aldehyde to alcohol catalyzed by the short-chain dehydrogenase/reductase bsc3 to yield the diol compound fusicocca-1,10(14)-diene-8 beta,16-diol. The next step is the oxidation at the C-3 position of fusicocca-2,10(14)-diene-8-beta,16-diol catalyzed by the alpha-ketoglutarate dependent dioxygenase bsc9, to produce a triol compound. Methylation of the hydroxy group at position 16 is performed by the methyltransferase bsc6. 16-O-methylation is followed by oxidation at the C-13 position to ketone and an alkyl shift of the methyl group leads to brassicicene C. Although the probable acetyltransferase bsc4 is included in the gene cluster, no acetylation reactions are necessary for brassicicene C biosynthesis. However, the fact that brassicicene E, which is a structurally related compound having an acetoxy group at position 12, was previously isolated from another strain of A.brassicicola suggests that the ATCC 96836 strain might also produce a small amount of brassicicene E. The sequence is that of Cytochrome P450 monooxygenase bsc11 from Alternaria brassicicola (Dark leaf spot agent).